Consider the following 341-residue polypeptide: 4-hydroxy-2-oxovalerate aldolase (341 aa).

The 253-residue stretch at 5-257 (ITLHDMTLRD…ETGVDVFRIA (253 aa)) folds into the Pyruvate carboxyltransferase domain. Position 13–14 (13–14 (RD)) interacts with substrate. Asp-14 contacts Mn(2+). Catalysis depends on His-17, which acts as the Proton acceptor. Residues Ser-167 and His-196 each coordinate substrate. Residues His-196 and His-198 each contribute to the Mn(2+) site. A substrate-binding site is contributed by Tyr-287.

It belongs to the 4-hydroxy-2-oxovalerate aldolase family.

The catalysed reaction is (S)-4-hydroxy-2-oxopentanoate = acetaldehyde + pyruvate. The chain is 4-hydroxy-2-oxovalerate aldolase (mhpE) from Cupriavidus taiwanensis (strain DSM 17343 / BCRC 17206 / CCUG 44338 / CIP 107171 / LMG 19424 / R1) (Ralstonia taiwanensis (strain LMG 19424)).